We begin with the raw amino-acid sequence, 1260 residues long: uncharacterized protein (1260 aa).

It is found in the plastid. It localises to the chloroplast. This is an uncharacterized protein from Ostreococcus tauri.